Here is an 834-residue protein sequence, read N- to C-terminus: Periplasmic nitrate reductase (834 aa).

The segment at residues 1–31 (MTGELTRREMLKAHAAGIAAATAGIALPAAA) is a signal peptide (tat-type signal). Residues 43–99 (ITWSKAPCRFCGTGCGVMVGVKEGQVVATHGDMQAEVNRGLNCIKGYFLSKIMYGTD) enclose the 4Fe-4S Mo/W bis-MGD-type domain. [4Fe-4S] cluster contacts are provided by C50, C53, C57, and C85. Mo-bis(molybdopterin guanine dinucleotide) contacts are provided by residues K87, Q154, N179, C183, 216-223 (WGSNMAEM), 247-251 (STFTH), 266-268 (GTD), M377, Q381, N487, 513-514 (SD), K536, D563, and 723-732 (TGRVLEHWHS). Substrate is bound at residue W799. Mo-bis(molybdopterin guanine dinucleotide) contacts are provided by N807 and K824.

It belongs to the prokaryotic molybdopterin-containing oxidoreductase family. NasA/NapA/NarB subfamily. Component of the periplasmic nitrate reductase NapAB complex composed of NapA and NapB. The cofactor is [4Fe-4S] cluster. Requires Mo-bis(molybdopterin guanine dinucleotide) as cofactor. Predicted to be exported by the Tat system. The position of the signal peptide cleavage has not been experimentally proven.

It localises to the periplasm. It catalyses the reaction 2 Fe(II)-[cytochrome] + nitrate + 2 H(+) = 2 Fe(III)-[cytochrome] + nitrite + H2O. Functionally, catalytic subunit of the periplasmic nitrate reductase complex NapAB. Receives electrons from NapB and catalyzes the reduction of nitrate to nitrite. The protein is Periplasmic nitrate reductase of Rhizobium meliloti (strain 1021) (Ensifer meliloti).